The chain runs to 497 residues: Serine hydroxymethyltransferase, mitochondrial (497 aa).

A mitochondrion-targeting transit peptide spans 1 to 27 (MFIRRLHTSSRRLTCGEALRACQQTGA). Lys272 carries the post-translational modification N6-(pyridoxal phosphate)lysine.

Belongs to the SHMT family. In terms of assembly, homotetramer. Pyridoxal 5'-phosphate serves as cofactor.

The protein localises to the mitochondrion. It carries out the reaction (6R)-5,10-methylene-5,6,7,8-tetrahydrofolate + glycine + H2O = (6S)-5,6,7,8-tetrahydrofolate + L-serine. Its pathway is one-carbon metabolism; tetrahydrofolate interconversion. Its function is as follows. Interconversion of serine and glycine. The protein is Serine hydroxymethyltransferase, mitochondrial (SHM1) of Eremothecium gossypii (strain ATCC 10895 / CBS 109.51 / FGSC 9923 / NRRL Y-1056) (Yeast).